Consider the following 279-residue polypeptide: Armadillo repeat-containing protein 1 (279 aa).

Residues 36–78 (GCLPGLILFLDHPSPPVVHSALLALRYLAECRANREKMKGELG) form an ARM repeat. Residues 236–257 (EYLPEDESPSKEQDKAVSRVGS) are disordered. Residues 243–252 (SPSKEQDKAV) are compositionally biased toward basic and acidic residues.

As to quaternary structure, interacts with mitochondrial contact site and cristae organizing system (MICOS) complex components IMMT/MIC60 and MICOS10/MIC10. Interacts with mitochondrial outer membrane sorting assembly machinery (SAM) complex components SAMM50 and MTX1.

It is found in the cytoplasm. Its subcellular location is the mitochondrion. The protein resides in the mitochondrion outer membrane. Functionally, in association with mitochondrial contact site and cristae organizing system (MICOS) complex components and mitochondrial outer membrane sorting assembly machinery (SAM) complex components may regulate mitochondrial dynamics playing a role in determining mitochondrial length, distribution and motility. The sequence is that of Armadillo repeat-containing protein 1 (ARMC1) from Gallus gallus (Chicken).